The following is a 300-amino-acid chain: Ribosomal RNA small subunit methyltransferase H (300 aa).

Residues 35–37 (GGH), D55, F82, D100, and Q107 each bind S-adenosyl-L-methionine.

The protein belongs to the methyltransferase superfamily. RsmH family.

It is found in the cytoplasm. It carries out the reaction cytidine(1402) in 16S rRNA + S-adenosyl-L-methionine = N(4)-methylcytidine(1402) in 16S rRNA + S-adenosyl-L-homocysteine + H(+). Specifically methylates the N4 position of cytidine in position 1402 (C1402) of 16S rRNA. The sequence is that of Ribosomal RNA small subunit methyltransferase H from Chlamydia trachomatis serovar L2 (strain ATCC VR-902B / DSM 19102 / 434/Bu).